The primary structure comprises 41 residues: U-megalopygitoxin(11)-Mo28 (41 aa).

The first 29 residues, 1–29 (MRTTLLLLIIAITVMVFVSEAYAAPAPEP), serve as a signal peptide directing secretion.

The protein belongs to the caterpillar 11 family. Expressed by the venom apparatus.

It localises to the secreted. Probable toxin. In Megalopyge opercularis (Southern flannel moth), this protein is U-megalopygitoxin(11)-Mo28.